The chain runs to 332 residues: DNA-directed RNA polymerase subunit alpha (332 aa).

The tract at residues 2–234 (TVTANQVLRP…DQLSVFGDFT (233 aa)) is alpha N-terminal domain (alpha-NTD). An alpha C-terminal domain (alpha-CTD) region spans residues 248-332 (VDPVLLRPID…AGVAQHGMLG (85 aa)).

It belongs to the RNA polymerase alpha chain family. In terms of assembly, homodimer. The RNAP catalytic core consists of 2 alpha, 1 beta, 1 beta' and 1 omega subunit. When a sigma factor is associated with the core the holoenzyme is formed, which can initiate transcription.

It catalyses the reaction RNA(n) + a ribonucleoside 5'-triphosphate = RNA(n+1) + diphosphate. Functionally, DNA-dependent RNA polymerase catalyzes the transcription of DNA into RNA using the four ribonucleoside triphosphates as substrates. This chain is DNA-directed RNA polymerase subunit alpha, found in Xanthomonas axonopodis pv. citri (strain 306).